Here is a 557-residue protein sequence, read N- to C-terminus: Probable protein kinase UbiB (557 aa).

Positions 121-509 constitute a Protein kinase domain; sequence SFDTVPLASA…RKLQTRVVTA (389 aa). Residues 127-135 and Lys-154 each bind ATP; that span reads LASASIAQV. The Proton acceptor role is filled by Asp-289. Helical transmembrane passes span 506-526 and 535-555; these read VVTA…YGLH and VPVW…VAWL.

This sequence belongs to the ABC1 family. UbiB subfamily.

It is found in the cell inner membrane. It functions in the pathway cofactor biosynthesis; ubiquinone biosynthesis [regulation]. Its function is as follows. Is probably a protein kinase regulator of UbiI activity which is involved in aerobic coenzyme Q (ubiquinone) biosynthesis. This chain is Probable protein kinase UbiB, found in Xanthomonas euvesicatoria pv. vesicatoria (strain 85-10) (Xanthomonas campestris pv. vesicatoria).